We begin with the raw amino-acid sequence, 427 residues long: Adenylosuccinate synthetase (427 aa).

Residues 12-18 (GDEGKGK) and 40-42 (GHT) each bind GTP. Asp-13 (proton acceptor) is an active-site residue. Mg(2+) is bound by residues Asp-13 and Gly-40. Residues 13–16 (DEGK), 38–41 (NAGH), Thr-128, Arg-142, Gln-223, Thr-238, and Arg-302 each bind IMP. Residue His-41 is the Proton donor of the active site. 298–304 (TTTGRPR) is a substrate binding site. GTP-binding positions include Arg-304, 330–332 (KLD), and 412–414 (AVG).

It belongs to the adenylosuccinate synthetase family. As to quaternary structure, homodimer. The cofactor is Mg(2+).

The protein resides in the cytoplasm. The catalysed reaction is IMP + L-aspartate + GTP = N(6)-(1,2-dicarboxyethyl)-AMP + GDP + phosphate + 2 H(+). Its pathway is purine metabolism; AMP biosynthesis via de novo pathway; AMP from IMP: step 1/2. Functionally, plays an important role in the de novo pathway of purine nucleotide biosynthesis. Catalyzes the first committed step in the biosynthesis of AMP from IMP. The protein is Adenylosuccinate synthetase of Moorella thermoacetica (strain ATCC 39073 / JCM 9320).